The following is a 708-amino-acid chain: Fatty acid oxidation complex subunit alpha (708 aa).

Residues 1-191 (MDNNNAFQLS…KLGVVDACVP (191 aa)) are enoyl-CoA hydratase. Positions 311–708 (APVAAVGVLG…RAGLGEKFYP (398 aa)) are 3-hydroxyacyl-CoA dehydrogenase.

This sequence in the N-terminal section; belongs to the enoyl-CoA hydratase/isomerase family. It in the central section; belongs to the 3-hydroxyacyl-CoA dehydrogenase family. As to quaternary structure, heterotetramer of two alpha chains (FadJ) and two beta chains (FadI).

It localises to the cytoplasm. It carries out the reaction a (3S)-3-hydroxyacyl-CoA = a (2E)-enoyl-CoA + H2O. The enzyme catalyses a 4-saturated-(3S)-3-hydroxyacyl-CoA = a (3E)-enoyl-CoA + H2O. The catalysed reaction is a (3S)-3-hydroxyacyl-CoA + NAD(+) = a 3-oxoacyl-CoA + NADH + H(+). It catalyses the reaction (3S)-3-hydroxybutanoyl-CoA = (3R)-3-hydroxybutanoyl-CoA. The protein operates within lipid metabolism; fatty acid beta-oxidation. Its function is as follows. Catalyzes the formation of a hydroxyacyl-CoA by addition of water on enoyl-CoA. Also exhibits 3-hydroxyacyl-CoA epimerase and 3-hydroxyacyl-CoA dehydrogenase activities. This chain is Fatty acid oxidation complex subunit alpha, found in Vibrio cholerae serotype O1 (strain ATCC 39315 / El Tor Inaba N16961).